Consider the following 245-residue polypeptide: Probable ABC transporter ATP-binding protein p29 (245 aa).

One can recognise an ABC transporter domain in the interval 7–245 (LSFEKVSIIY…KEQLYKIYDN (239 aa)). 39-46 (GKSGVGKS) lines the ATP pocket.

This sequence belongs to the ABC transporter superfamily.

Its function is as follows. Part of a high-affinity transport system. This chain is Probable ABC transporter ATP-binding protein p29 (p29), found in Mycoplasma genitalium (strain ATCC 33530 / DSM 19775 / NCTC 10195 / G37) (Mycoplasmoides genitalium).